A 399-amino-acid polypeptide reads, in one-letter code: Elongation factor Tu (399 aa).

A tr-type G domain is found at 10 to 209; the sequence is KPHVNIGTIG…AVDSYIPTPK (200 aa). The G1 stretch occupies residues 19 to 26; that stretch reads GHVDHGKT. 19–26 serves as a coordination point for GTP; sequence GHVDHGKT. Mg(2+) is bound at residue Thr26. Positions 60-64 are G2; the sequence is GITIA. The segment at 81 to 84 is G3; sequence DCPG. Residues 81-85 and 136-139 contribute to the GTP site; these read DCPGH and NKTD. Residues 136-139 are G4; the sequence is NKTD. The G5 stretch occupies residues 174-176; sequence SAL.

Belongs to the TRAFAC class translation factor GTPase superfamily. Classic translation factor GTPase family. EF-Tu/EF-1A subfamily. In terms of assembly, monomer.

The protein resides in the cytoplasm. The enzyme catalyses GTP + H2O = GDP + phosphate + H(+). Functionally, GTP hydrolase that promotes the GTP-dependent binding of aminoacyl-tRNA to the A-site of ribosomes during protein biosynthesis. This is Elongation factor Tu from Campylobacter hominis (strain ATCC BAA-381 / DSM 21671 / CCUG 45161 / LMG 19568 / NCTC 13146 / CH001A).